The following is a 370-amino-acid chain: 3-isopropylmalate dehydrogenase 1 (370 aa).

Substrate contacts are provided by R98, R108, R136, and D227. 3 residues coordinate Mg(2+): D227, D251, and D255. 289-301 serves as a coordination point for NAD(+); that stretch reads GSAPDIAGQGIAN.

The protein belongs to the isocitrate and isopropylmalate dehydrogenases family. LeuB type 1 subfamily. Homodimer. Mg(2+) is required as a cofactor. Requires Mn(2+) as cofactor.

It localises to the cytoplasm. The enzyme catalyses (2R,3S)-3-isopropylmalate + NAD(+) = 4-methyl-2-oxopentanoate + CO2 + NADH. It functions in the pathway amino-acid biosynthesis; L-leucine biosynthesis; L-leucine from 3-methyl-2-oxobutanoate: step 3/4. Catalyzes the oxidation of 3-carboxy-2-hydroxy-4-methylpentanoate (3-isopropylmalate) to 3-carboxy-4-methyl-2-oxopentanoate. The product decarboxylates to 4-methyl-2 oxopentanoate. In Bordetella bronchiseptica (strain ATCC BAA-588 / NCTC 13252 / RB50) (Alcaligenes bronchisepticus), this protein is 3-isopropylmalate dehydrogenase 1.